We begin with the raw amino-acid sequence, 293 residues long: Acetylglutamate kinase (293 aa).

Substrate contacts are provided by residues 71-72, Arg93, and Asn186; that span reads GG.

Belongs to the acetylglutamate kinase family. ArgB subfamily.

It is found in the cytoplasm. The enzyme catalyses N-acetyl-L-glutamate + ATP = N-acetyl-L-glutamyl 5-phosphate + ADP. The protein operates within amino-acid biosynthesis; L-arginine biosynthesis; N(2)-acetyl-L-ornithine from L-glutamate: step 2/4. Catalyzes the ATP-dependent phosphorylation of N-acetyl-L-glutamate. This chain is Acetylglutamate kinase, found in Synechococcus sp. (strain WH7803).